The following is a 325-amino-acid chain: Probable isoaspartyl peptidase/L-asparaginase GA20639 (325 aa).

The Nucleophile role is filled by Thr184. Residues 212–215 (RIGD) and 235–238 (TGHG) each bind substrate.

This sequence belongs to the Ntn-hydrolase family. In terms of assembly, heterodimer of an alpha and beta chain produced by autocleavage. Post-translationally, cleaved into an alpha and beta chain by autocatalysis; this activates the enzyme. The N-terminal residue of the beta subunit is responsible for the nucleophile hydrolase activity.

It carries out the reaction L-asparagine + H2O = L-aspartate + NH4(+). It catalyses the reaction Cleavage of a beta-linked Asp residue from the N-terminus of a polypeptide.. Its function is as follows. Has both L-asparaginase and beta-aspartyl peptidase activity. Does not have aspartylglucosaminidase activity and is inactive toward GlcNAc-L-Asn. Likewise, has no activity toward glutamine. The sequence is that of Probable isoaspartyl peptidase/L-asparaginase GA20639 from Drosophila pseudoobscura pseudoobscura (Fruit fly).